Here is a 364-residue protein sequence, read N- to C-terminus: Medium-wave-sensitive opsin 1 (364 aa).

At 1–52 (MAQRWGPHALSGVQAQDAYEDSTQASLFTYTNSNNTRGPFEGPNYHIAPRWV) the chain is on the extracellular side. Residues 17 to 43 (DAYEDSTQASLFTYTNSNNTRGPFEGP) are required for 11-cis-retinal regeneration. N-linked (GlcNAc...) asparagine glycosylation occurs at Asn34. Residues 53–77 (YHLTSAWMTIVVIASIFTNGLVLVA) form a helical membrane-spanning segment. The Cytoplasmic segment spans residues 78–89 (TMRFKKLRHPLN). A helical transmembrane segment spans residues 90 to 115 (WILVNLAVADLAETVIASTISVVNQV). Residues 116 to 129 (YGYFVLGHPLCVVE) are Extracellular-facing. A disulfide bridge links Cys126 with Cys203. A helical membrane pass occupies residues 130–149 (GYTVSLCGITGLWSLAIISW). At 150 to 168 (ERWLVVCKPFGNVRFDAKL) the chain is on the cytoplasmic side. Residues 169–192 (AIVGIVFSWVWSAVWTAPPIFGWS) form a helical membrane-spanning segment. Residues 193 to 218 (RYWPYGLKTSCGPDVFSGTSYPGVQS) are Extracellular-facing. A helical transmembrane segment spans residues 219-246 (YMMVLMVTCCITPLSIIVLCYLHVWLAI). The Cytoplasmic portion of the chain corresponds to 247–268 (RAVAKQQKESESTQKAEKEVTR). A helical membrane pass occupies residues 269-292 (MVVVMVLAYCLCWGPYAFFACFAT). Residues 293–300 (ANPGYSFH) lie on the Extracellular side of the membrane. The helical transmembrane segment at 301–325 (PLVAALPAYFAKSATIYNPIIYVFM) threads the bilayer. An N6-(retinylidene)lysine modification is found at Lys312. The Cytoplasmic portion of the chain corresponds to 326–364 (NRQFRNCILQLFGKKVEDSSELSSTSRTEASSVSSVSPA).

This sequence belongs to the G-protein coupled receptor 1 family. Opsin subfamily. Monomer. Homodimer. Homotetramer. In terms of processing, O-glycosylated. Phosphorylated on some or all of the serine and threonine residues present in the C-terminal region. As to expression, expressed in cone photoreceptor cells.

It is found in the membrane. Functionally, visual pigments are the light-absorbing molecules that mediate vision. They consist of an apoprotein, opsin, covalently linked to cis-retinal. May increase spectral sensitivity in dim light. In Cavia porcellus (Guinea pig), this protein is Medium-wave-sensitive opsin 1 (OPN1MW).